The following is a 273-amino-acid chain: Hemin import ATP-binding protein HmuV (273 aa).

Residues 2–256 (LTAHHLDVAR…AHIAQCYGFA (255 aa)) form the ABC transporter domain. 34–41 (GRNGAGKS) contributes to the ATP binding site.

Belongs to the ABC transporter superfamily. Heme (hemin) importer (TC 3.A.1.14.5) family. As to quaternary structure, the complex is composed of two ATP-binding proteins (HmuV), two transmembrane proteins (HmuU) and a solute-binding protein (HmuT).

Its subcellular location is the cell inner membrane. Its function is as follows. Part of the ABC transporter complex HmuTUV involved in hemin import. Responsible for energy coupling to the transport system. The sequence is that of Hemin import ATP-binding protein HmuV from Burkholderia ambifaria (strain ATCC BAA-244 / DSM 16087 / CCUG 44356 / LMG 19182 / AMMD) (Burkholderia cepacia (strain AMMD)).